Consider the following 368-residue polypeptide: Glutamate 5-kinase (368 aa).

ATP is bound at residue Lys9. Ser49, Asp136, and Asn148 together coordinate substrate. Residues 168 to 169 (TD) and 210 to 216 (TGGMMTK) each bind ATP. A PUA domain is found at 275 to 353 (AGIITIDNGA…ADIENVLGYE (79 aa)).

This sequence belongs to the glutamate 5-kinase family.

The protein resides in the cytoplasm. The catalysed reaction is L-glutamate + ATP = L-glutamyl 5-phosphate + ADP. It participates in amino-acid biosynthesis; L-proline biosynthesis; L-glutamate 5-semialdehyde from L-glutamate: step 1/2. Its function is as follows. Catalyzes the transfer of a phosphate group to glutamate to form L-glutamate 5-phosphate. The protein is Glutamate 5-kinase of Haemophilus influenzae (strain PittGG).